We begin with the raw amino-acid sequence, 355 residues long: UDP-N-acetylglucosamine--N-acetylmuramyl-(pentapeptide) pyrophosphoryl-undecaprenol N-acetylglucosamine transferase (355 aa).

UDP-N-acetyl-alpha-D-glucosamine contacts are provided by residues 11–13 (TGG), N123, R162, S185, I239, 258–263 (ALTVSE), and Q284.

Belongs to the glycosyltransferase 28 family. MurG subfamily.

It is found in the cell inner membrane. The enzyme catalyses di-trans,octa-cis-undecaprenyl diphospho-N-acetyl-alpha-D-muramoyl-L-alanyl-D-glutamyl-meso-2,6-diaminopimeloyl-D-alanyl-D-alanine + UDP-N-acetyl-alpha-D-glucosamine = di-trans,octa-cis-undecaprenyl diphospho-[N-acetyl-alpha-D-glucosaminyl-(1-&gt;4)]-N-acetyl-alpha-D-muramoyl-L-alanyl-D-glutamyl-meso-2,6-diaminopimeloyl-D-alanyl-D-alanine + UDP + H(+). It functions in the pathway cell wall biogenesis; peptidoglycan biosynthesis. Cell wall formation. Catalyzes the transfer of a GlcNAc subunit on undecaprenyl-pyrophosphoryl-MurNAc-pentapeptide (lipid intermediate I) to form undecaprenyl-pyrophosphoryl-MurNAc-(pentapeptide)GlcNAc (lipid intermediate II). In Hydrogenovibrio crunogenus (strain DSM 25203 / XCL-2) (Thiomicrospira crunogena), this protein is UDP-N-acetylglucosamine--N-acetylmuramyl-(pentapeptide) pyrophosphoryl-undecaprenol N-acetylglucosamine transferase.